Consider the following 247-residue polypeptide: tRNA uridine(34) hydroxylase (247 aa).

A Rhodanese domain is found at 124 to 218 (TKQDVIVIDT…YLEDTQNKNN (95 aa)). The active-site Cysteine persulfide intermediate is Cys178.

The protein belongs to the TrhO family.

The catalysed reaction is uridine(34) in tRNA + AH2 + O2 = 5-hydroxyuridine(34) in tRNA + A + H2O. Its function is as follows. Catalyzes oxygen-dependent 5-hydroxyuridine (ho5U) modification at position 34 in tRNAs. The protein is tRNA uridine(34) hydroxylase of Rickettsia rickettsii (strain Iowa).